Reading from the N-terminus, the 254-residue chain is NADPH-dependent ferric-chelate reductase (254 aa).

In terms of domain architecture, FAD-binding FR-type spans 15-136 (LRFRELTVLR…AGPRGSLVVP (122 aa)).

The protein belongs to the SIP oxidoreductase family.

The protein localises to the cytoplasm. The catalysed reaction is 2 a Fe(II)-siderophore + NADP(+) + H(+) = 2 a Fe(III)-siderophore + NADPH. Its function is as follows. Plays a role in iron homeostasis under excess nickel conditions. This chain is NADPH-dependent ferric-chelate reductase (yqjH), found in Escherichia coli (strain K12).